The following is a 636-amino-acid chain: Outer spore wall assembly protein SHE10 (636 aa).

The signal sequence occupies residues 1–23; sequence MRLVSKLLKALLVLLLAFGSVRY. Coiled coils occupy residues 433 to 460 and 551 to 584; these read RAHL…LFEE and KANL…TEFE. Residues 565-607 are disordered; the sequence is QQREKEKAESASMKASTEFELSSSSFSSSSPSTASSCTASSTS. The span at 579–607 shows a compositional bias: low complexity; that stretch reads ASTEFELSSSSFSSSSPSTASSCTASSTS.

It belongs to the SHE10 family. In terms of assembly, component of the mitochondria-localized RNase mitochondrial RNA-processing (RNase MRP) composed of one single RNA encoded by the NME1 gene and at least 31 proteins. Absent in the nucleus-localized RNase MRP (NuMRP).

Its subcellular location is the mitochondrion. Functionally, involved in spore wall assembly. May be a component of the mitochondrial RNase MRP (MtMRP), a ribonucleoprotein endoribonuclease involved in the cleaving RNA transcripts to generate primers for DNA replication in mitochondria. The polypeptide is Outer spore wall assembly protein SHE10 (Kluyveromyces lactis (strain ATCC 8585 / CBS 2359 / DSM 70799 / NBRC 1267 / NRRL Y-1140 / WM37) (Yeast)).